The chain runs to 681 residues: Spermatogenesis-associated protein 21 (681 aa).

The segment covering 1 to 14 has biased composition (basic and acidic residues); the sequence is MENRNTHTHPESKA. Disordered stretches follow at residues 1 to 284 and 298 to 336; these read MENR…ANSR and EEAT…VPTL. Composition is skewed to polar residues over residues 83–94 and 159–173; these read QEPSARPRTTQD and PSNS…NSPS. A compositionally biased stretch (basic and acidic residues) spans 251–261; it reads PEERDTEKKEL. A compositionally biased stretch (polar residues) spans 264-281; that stretch reads GQKQRQQALSAAGTQGPA. Residues 319–335 show a composition bias toward low complexity; sequence TVTSVSTSGPISSSVPT. Residues 464 to 499 form the EF-hand domain; the sequence is FTPAQVEEALMSADVNGDGHVDFKDFLAVMTDTKRF. Residues aspartate 477, asparagine 479, aspartate 481, histidine 483, and aspartate 488 each contribute to the Ca(2+) site. A disordered region spans residues 653–681; sequence LFFQPGQQGSREHSSDSRKWLSSMPARTH. Over residues 662–671 the composition is skewed to basic and acidic residues; the sequence is SREHSSDSRK.

In terms of biological role, involved in the differentiation of haploid spermatids. The protein is Spermatogenesis-associated protein 21 (Spata21) of Mus musculus (Mouse).